A 184-amino-acid polypeptide reads, in one-letter code: ATP-dependent 6-phosphofructokinase (184 aa).

The tract at residues G1–Q184 is N-terminal catalytic PFK domain 1. G2–S5 lines the ATP pocket. D3 is a Mg(2+) binding site. Substrate-binding positions include S48 to D50, R85, M92 to R94, E148, R176, and H182 to Q184. The active-site Proton acceptor is D50.

It belongs to the phosphofructokinase type A (PFKA) family. ATP-dependent PFK group I subfamily. Eukaryotic two domain clade 'E' sub-subfamily. In terms of assembly, homotetramer. Requires Mg(2+) as cofactor.

The protein localises to the cytoplasm. It catalyses the reaction beta-D-fructose 6-phosphate + ATP = beta-D-fructose 1,6-bisphosphate + ADP + H(+). Its pathway is carbohydrate degradation; glycolysis; D-glyceraldehyde 3-phosphate and glycerone phosphate from D-glucose: step 3/4. Its activity is regulated as follows. Allosterically activated by ADP, AMP, or fructose 2,6-bisphosphate, and allosterically inhibited by ATP or citrate. In terms of biological role, catalyzes the phosphorylation of D-fructose 6-phosphate to fructose 1,6-bisphosphate by ATP, the first committing step of glycolysis. The chain is ATP-dependent 6-phosphofructokinase (PFK) from Calanus finmarchicus (Calanus tonsus).